A 78-amino-acid chain; its full sequence is LYR motif-containing protein 9 (78 aa).

It belongs to the complex I LYR family. LYRM9 subfamily.

In Mus musculus (Mouse), this protein is LYR motif-containing protein 9 (Lyrm9).